Consider the following 614-residue polypeptide: UPF0329 protein ECU03_0090 (614 aa).

Composition is skewed to basic and acidic residues over residues Glu-317–Leu-338 and Leu-345–Lys-354. Positions Glu-317–Tyr-420 are disordered. Residues Ser-355–Lys-364 are compositionally biased toward basic residues. A compositionally biased stretch (basic and acidic residues) spans Ala-372–Ser-381. Residues Glu-382–Leu-394 show a composition bias toward acidic residues. The span at Ser-408–Tyr-420 shows a compositional bias: basic residues.

The protein belongs to the UPF0329 family.

The polypeptide is UPF0329 protein ECU03_0090 (Encephalitozoon cuniculi (strain GB-M1) (Microsporidian parasite)).